The primary structure comprises 237 residues: Neural retina-specific leucine zipper protein (237 aa).

Residues K20 and K24 each participate in a glycyl lysine isopeptide (Lys-Gly) (interchain with G-Cter in SUMO) cross-link. Residues V23 to G57 are disordered. A minimal transactivation domain (MTD) region spans residues G30 to E93. Residues R159–R185 are basic motif. The 64-residue stretch at R159–L222 folds into the bZIP domain. The tract at residues L187–L208 is leucine-zipper.

It belongs to the bZIP family. In terms of assembly, interacts with FIZ1; this interaction represses transactivation. Interacts (via the leucine-zipper domain) with CRX. In terms of processing, phosphorylated. Post-translationally, disumoylated at Lys-20. Sumoylation modulates the transcriptional activity of NRL on RHO and NR2E3 promoters, and is required for normal rod differentiation. In terms of tissue distribution, expressed in the brain and the retina. Expressed strongly in rod and cone cells (at protein level).

Its subcellular location is the cytoplasm. It localises to the nucleus. In terms of biological role, acts as a transcriptional activator which regulates the expression of several rod-specific genes, including RHO and PDE6B. Also functions as a transcriptional coactivator, stimulating transcription mediated by the transcription factor CRX and NR2E3. Binds to the rhodopsin promoter in a sequence-specific manner. The protein is Neural retina-specific leucine zipper protein (NRL) of Homo sapiens (Human).